Here is a 278-residue protein sequence, read N- to C-terminus: MNPYIVLLKPRVIWLLILSSVVGYVYAAGTVDWGRLAALTAAATLAVGGSAAFNHYWERDIDAAMARTARRPLPAGAIPPSNALVYSLALSATGILLGFYLLGPLPGVFVALGWFFYAVVYTVWLKRRTWLNILGGGFAGNATFLGGYALGKGTVDLPAVLISFAIYLWIPSHIWALAYKYREDYRRAGVPMLPAIIDEGKAVAIISALNIASAAYILWLYLVFGRGLPGLALVLAGVAGTVATSALALREKSDRAMWRMYKASSPILTLFLLALVFS.

The next 9 helical transmembrane spans lie at 12–32 (VIWL…GTVD), 36–56 (LAAL…FNHY), 72–92 (PLPA…ALSA), 105–124 (LPGV…YTVW), 130–150 (WLNI…GYAL), 157–177 (LPAV…IWAL), 204–224 (AIIS…YLVF), 228–248 (LPGL…SALA), and 257–277 (MWRM…ALVF).

The protein belongs to the UbiA prenyltransferase family. Protoheme IX farnesyltransferase subfamily.

The protein localises to the cell membrane. It carries out the reaction heme b + (2E,6E)-farnesyl diphosphate + H2O = Fe(II)-heme o + diphosphate. It participates in porphyrin-containing compound metabolism; heme O biosynthesis; heme O from protoheme: step 1/1. Functionally, converts heme B (protoheme IX) to heme O by substitution of the vinyl group on carbon 2 of heme B porphyrin ring with a hydroxyethyl farnesyl side group. The polypeptide is Protoheme IX farnesyltransferase (Pyrobaculum neutrophilum (strain DSM 2338 / JCM 9278 / NBRC 100436 / V24Sta) (Thermoproteus neutrophilus)).